The following is a 137-amino-acid chain: Large ribosomal subunit protein uL16 (137 aa).

It belongs to the universal ribosomal protein uL16 family. In terms of assembly, part of the 50S ribosomal subunit.

In terms of biological role, binds 23S rRNA and is also seen to make contacts with the A and possibly P site tRNAs. The chain is Large ribosomal subunit protein uL16 from Beijerinckia indica subsp. indica (strain ATCC 9039 / DSM 1715 / NCIMB 8712).